The following is a 146-amino-acid chain: Lysozyme C-2 (146 aa).

Positions 1 to 18 (MKTLLVLALLLLSVSVQA) are cleaved as a signal peptide. In terms of domain architecture, C-type lysozyme spans 19–146 (KVYDRCEFAR…VSQYIRGCKL (128 aa)). Cystine bridges form between cysteine 24–cysteine 144, cysteine 48–cysteine 132, cysteine 81–cysteine 97, and cysteine 93–cysteine 111. Catalysis depends on residues glutamate 53 and aspartate 69.

The protein belongs to the glycosyl hydrolase 22 family. Monomer.

The protein localises to the secreted. The catalysed reaction is Hydrolysis of (1-&gt;4)-beta-linkages between N-acetylmuramic acid and N-acetyl-D-glucosamine residues in a peptidoglycan and between N-acetyl-D-glucosamine residues in chitodextrins.. Functionally, lysozymes have primarily a bacteriolytic function; those in tissues and body fluids are associated with the monocyte-macrophage system and enhance the activity of immunoagents. This Sus scrofa (Pig) protein is Lysozyme C-2.